The chain runs to 232 residues: 2,3-bisphosphoglycerate-dependent phosphoglycerate mutase 1 (232 aa).

Substrate is bound by residues 8-15 (RHGQSLWN), 21-22 (TG), arginine 58, 114-117 (ERYY), lysine 125, 141-142 (RR), and 185-186 (GN). Histidine 9 serves as the catalytic Tele-phosphohistidine intermediate. The active-site Proton donor/acceptor is the glutamate 114.

Belongs to the phosphoglycerate mutase family. BPG-dependent PGAM subfamily.

It carries out the reaction (2R)-2-phosphoglycerate = (2R)-3-phosphoglycerate. It functions in the pathway carbohydrate degradation; glycolysis; pyruvate from D-glyceraldehyde 3-phosphate: step 3/5. In terms of biological role, catalyzes the interconversion of 2-phosphoglycerate and 3-phosphoglycerate. This Gloeobacter violaceus (strain ATCC 29082 / PCC 7421) protein is 2,3-bisphosphoglycerate-dependent phosphoglycerate mutase 1.